A 242-amino-acid polypeptide reads, in one-letter code: Small ribosomal subunit protein uS2 (242 aa).

It belongs to the universal ribosomal protein uS2 family.

This is Small ribosomal subunit protein uS2 from Shewanella denitrificans (strain OS217 / ATCC BAA-1090 / DSM 15013).